Reading from the N-terminus, the 760-residue chain is Serine/threonine-protein kinase dkf-1 (760 aa).

2 Phorbol-ester/DAG-type zinc fingers span residues 103–153 (PHVV…GIIV) and 194–244 (PHTL…PSNC). The region spanning 316–444 (KNLEGWMIHF…QFIKESLQPP (129 aa)) is the PH domain. The Protein kinase domain maps to 464–725 (VLSDKTLGSG…IEKCLEHGWL (262 aa)). Residues 470–478 (LGSGQFGTV) and K493 each bind ATP. Catalysis depends on D589, which acts as the Proton acceptor. Position 626 is a phosphothreonine (T626).

This sequence belongs to the protein kinase superfamily. CAMK Ser/Thr protein kinase family. PKD subfamily. Requires Mg(2+) as cofactor. In terms of processing, prolonged phosphorylation at Thr-626 results in ubiquitination and degradation.

It localises to the cytoplasm. The protein resides in the membrane. It catalyses the reaction L-seryl-[protein] + ATP = O-phospho-L-seryl-[protein] + ADP + H(+). It carries out the reaction L-threonyl-[protein] + ATP = O-phospho-L-threonyl-[protein] + ADP + H(+). With respect to regulation, activated by DAG and phorbol esters. Phorbol-ester/DAG-type domain 1 binds phorbol ester with high affinity and mediates accumulation at the cell periphery. Phorbol-ester/DAG-type domain 2 binds phorbol ester with low affinity but may mediate initial contact, resulting in a conformational change allowing previously occluded domain 1 to anchor the kinase. Phosphorylation on Thr-626 is then also required for activation and may also result in a further conformational change. Its function is as follows. Converts transient diacylglycerol (DAG) signals into prolonged physiological effects, independently of PKC. Role in the regulation of growth and neuromuscular control of movement. Involved in immune response to S.aureus bacterium by activating transcription factor hlh-30 downstream of phospholipase plc-1. The sequence is that of Serine/threonine-protein kinase dkf-1 from Caenorhabditis briggsae.